Consider the following 180-residue polypeptide: MSLDSSSKSTFISQKIDTGILGEELVAKWLNLEGWQILHRRWQCPWGELDIVATKTTSSLRDSSNYKFPILAFVEVKTRSRGNWDQDGLLAVTESKQAKLWKTAEIFLSDRPELVDYSCRFDVALVRCNYIRKNSQAQKKLSIEQQISELTVDIGNSVELAGYQLVLHNYIASAFIIHLD.

Belongs to the UPF0102 family.

This is UPF0102 protein Tery_0733 from Trichodesmium erythraeum (strain IMS101).